Reading from the N-terminus, the 167-residue chain is Antibacterial peptide PMAP-37 (167 aa).

Positions 1 to 29 (METQRASLCLGRWSLWLLLLALVVPSASA) are cleaved as a signal peptide. Positions 30 to 130 (QALSYREAVL…DITCNEIQSV (101 aa)) are excised as a propeptide. 2 cysteine pairs are disulfide-bonded: Cys85–Cys96 and Cys107–Cys124.

Belongs to the cathelicidin family.

It is found in the secreted. In terms of biological role, exerts antimicrobial activity against both Gram-positive and negative bacteria with minimal inhibitory concentrations ranging over 1-4 micro molar. Its activity appears to be mediated by its ability to damage bacterial membranes. This Sus scrofa (Pig) protein is Antibacterial peptide PMAP-37 (PMAP37).